We begin with the raw amino-acid sequence, 213 residues long: Transcriptional regulatory protein CrdR (213 aa).

One can recognise a Response regulatory domain in the interval 4 to 119; it reads KIFLLEDDYL…ELEARIKRFF (116 aa). Residue Asp53 is modified to 4-aspartylphosphate. Residues 121–212 constitute a DNA-binding region (ompR/PhoB-type); it reads DDPIEIMPNI…HKGVGYRFNP (92 aa).

Phosphorylated by CrdS.

Functionally, member of the two-component regulatory system CrdR/CrdS that induces the transcriptional induction of the copper resistance determinant CrdA. Upon phosphorylation by CrdS, functions as a transcriptional regulator by direct binding to promoter regions of target genes including the crdA promoter or nitric oxide-responsive gene promoters. The sequence is that of Transcriptional regulatory protein CrdR from Helicobacter pylori (strain ATCC 700392 / 26695) (Campylobacter pylori).